The primary structure comprises 202 residues: Histone H1 (202 aa).

Disordered stretches follow at residues 1 to 50 (MTAI…VTHP) and 114 to 202 (YKLS…KIAV). A compositionally biased stretch (basic and acidic residues) spans 18–38 (EASKVKEQAPATDKKPRAPKE). An H15 domain is found at 48-118 (THPPYFQMIK…KIKASYKLSE (71 aa)). Residues 160-202 (KAKATPKPKKVGAKRTRKSTPAKAKQPKSIKSPAAKRAKKIAV) show a composition bias toward basic residues.

Belongs to the histone H1/H5 family.

It localises to the nucleus. The protein localises to the chromosome. Histones H1 are necessary for the condensation of nucleosome chains into higher-order structures. The chain is Histone H1 from Solanum pennellii (Tomato).